The primary structure comprises 203 residues: Large ribosomal subunit protein uL3 (203 aa).

Belongs to the universal ribosomal protein uL3 family. Part of the 50S ribosomal subunit. Forms a cluster with proteins L14 and L19.

One of the primary rRNA binding proteins, it binds directly near the 3'-end of the 23S rRNA, where it nucleates assembly of the 50S subunit. This chain is Large ribosomal subunit protein uL3, found in Christiangramia forsetii (strain DSM 17595 / CGMCC 1.15422 / KT0803) (Gramella forsetii).